The following is a 597-amino-acid chain: Arginine--tRNA ligase (597 aa).

The 'HIGH' region signature appears at 138–148; the sequence is ANPTGPMHVGH.

It belongs to the class-I aminoacyl-tRNA synthetase family. Monomer.

The protein localises to the cytoplasm. It carries out the reaction tRNA(Arg) + L-arginine + ATP = L-arginyl-tRNA(Arg) + AMP + diphosphate. The sequence is that of Arginine--tRNA ligase from Rhodopseudomonas palustris (strain HaA2).